The following is a 63-amino-acid chain: Large ribosomal subunit protein bL28 (63 aa).

This sequence belongs to the bacterial ribosomal protein bL28 family.

The polypeptide is Large ribosomal subunit protein bL28 (Clostridium botulinum (strain ATCC 19397 / Type A)).